The chain runs to 240 residues: 4-hydroxy-tetrahydrodipicolinate reductase (240 aa).

NAD(+)-binding positions include 79–81 and 103–106; these read ATT and SANM. Histidine 135 (proton donor/acceptor) is an active-site residue. Position 136 (histidine 136) interacts with (S)-2,3,4,5-tetrahydrodipicolinate. Lysine 139 serves as the catalytic Proton donor. 145–146 contacts (S)-2,3,4,5-tetrahydrodipicolinate; sequence GT.

The protein belongs to the DapB family.

It is found in the cytoplasm. The catalysed reaction is (S)-2,3,4,5-tetrahydrodipicolinate + NAD(+) + H2O = (2S,4S)-4-hydroxy-2,3,4,5-tetrahydrodipicolinate + NADH + H(+). It carries out the reaction (S)-2,3,4,5-tetrahydrodipicolinate + NADP(+) + H2O = (2S,4S)-4-hydroxy-2,3,4,5-tetrahydrodipicolinate + NADPH + H(+). The protein operates within amino-acid biosynthesis; L-lysine biosynthesis via DAP pathway; (S)-tetrahydrodipicolinate from L-aspartate: step 4/4. Its function is as follows. Catalyzes the conversion of 4-hydroxy-tetrahydrodipicolinate (HTPA) to tetrahydrodipicolinate. In Staphylococcus aureus (strain Mu3 / ATCC 700698), this protein is 4-hydroxy-tetrahydrodipicolinate reductase.